A 321-amino-acid polypeptide reads, in one-letter code: Lipoyl synthase (321 aa).

7 residues coordinate [4Fe-4S] cluster: Cys-68, Cys-73, Cys-79, Cys-94, Cys-98, Cys-101, and Ser-308. The 218-residue stretch at 80-297 (FNHGTATFMI…KAEAMAMGFT (218 aa)) folds into the Radical SAM core domain.

The protein belongs to the radical SAM superfamily. Lipoyl synthase family. It depends on [4Fe-4S] cluster as a cofactor.

It localises to the cytoplasm. It catalyses the reaction [[Fe-S] cluster scaffold protein carrying a second [4Fe-4S](2+) cluster] + N(6)-octanoyl-L-lysyl-[protein] + 2 oxidized [2Fe-2S]-[ferredoxin] + 2 S-adenosyl-L-methionine + 4 H(+) = [[Fe-S] cluster scaffold protein] + N(6)-[(R)-dihydrolipoyl]-L-lysyl-[protein] + 4 Fe(3+) + 2 hydrogen sulfide + 2 5'-deoxyadenosine + 2 L-methionine + 2 reduced [2Fe-2S]-[ferredoxin]. It functions in the pathway protein modification; protein lipoylation via endogenous pathway; protein N(6)-(lipoyl)lysine from octanoyl-[acyl-carrier-protein]: step 2/2. Functionally, catalyzes the radical-mediated insertion of two sulfur atoms into the C-6 and C-8 positions of the octanoyl moiety bound to the lipoyl domains of lipoate-dependent enzymes, thereby converting the octanoylated domains into lipoylated derivatives. In Yersinia enterocolitica serotype O:8 / biotype 1B (strain NCTC 13174 / 8081), this protein is Lipoyl synthase.